A 699-amino-acid polypeptide reads, in one-letter code: Elongation factor G (699 aa).

One can recognise a tr-type G domain in the interval 8-290 (NKYRNLGIMA…KVIELLPSPV (283 aa)). GTP is bound by residues 17 to 24 (AHIDAGKT), 88 to 92 (DTPGH), and 142 to 145 (NKMD).

The protein belongs to the TRAFAC class translation factor GTPase superfamily. Classic translation factor GTPase family. EF-G/EF-2 subfamily.

The protein resides in the cytoplasm. Its function is as follows. Catalyzes the GTP-dependent ribosomal translocation step during translation elongation. During this step, the ribosome changes from the pre-translocational (PRE) to the post-translocational (POST) state as the newly formed A-site-bound peptidyl-tRNA and P-site-bound deacylated tRNA move to the P and E sites, respectively. Catalyzes the coordinated movement of the two tRNA molecules, the mRNA and conformational changes in the ribosome. The chain is Elongation factor G from Dichelobacter nodosus (strain VCS1703A).